Consider the following 52-residue polypeptide: Lysis protein for colicin N (52 aa).

The N-terminal stretch at 1–17 is a signal peptide; sequence MCGKILLILFFIMTLSA. Cysteine 18 carries the N-palmitoyl cysteine lipid modification. Cysteine 18 is lipidated: S-diacylglycerol cysteine.

Its subcellular location is the cell outer membrane. Lysis proteins are required for both colicin release and partial cell lysis. In Escherichia coli, this protein is Lysis protein for colicin N (cnl).